A 220-amino-acid chain; its full sequence is Large ribosomal subunit protein bL9 (220 aa).

The segment covering 167-184 has biased composition (low complexity); the sequence is AAAEVEQAEDVAAAEQQD. The segment at 167–220 is disordered; the sequence is AAAEVEQAEDVAAAEQQDSSPVDDHADDADGVADGEGRDEGAGDASDEEEMPST. Residues 211–220 show a composition bias toward acidic residues; that stretch reads ASDEEEMPST.

This sequence belongs to the bacterial ribosomal protein bL9 family.

Its function is as follows. Binds to the 23S rRNA. The chain is Large ribosomal subunit protein bL9 from Anaplasma marginale (strain Florida).